Consider the following 883-residue polypeptide: Probable pre-mRNA-splicing factor ATP-dependent RNA helicase DEAH8 (883 aa).

Positions 232-395 constitute a Helicase ATP-binding domain; it reads LKLIEENQVL…FDSARIYLIP (164 aa). 245–252 is a binding site for ATP; it reads GETGSGKT. Positions 342-345 match the DEAH box motif; that stretch reads DEAH. Residues 416 to 589 enclose the Helicase C-terminal domain; sequence TVIRTVVQIH…SVVLTLKSLG (174 aa). A disordered region spans residues 845 to 883; the sequence is EDTRPKKTQRRIEEASTSKVDTNKKTRTSKVDTNKKSKR.

It belongs to the DEAD box helicase family. DEAH subfamily. PRP2 sub-subfamily. In terms of tissue distribution, predominantly expressed in flowers.

It catalyses the reaction ATP + H2O = ADP + phosphate + H(+). Its function is as follows. May be involved in pre-mRNA splicing. This chain is Probable pre-mRNA-splicing factor ATP-dependent RNA helicase DEAH8, found in Arabidopsis thaliana (Mouse-ear cress).